We begin with the raw amino-acid sequence, 1392 residues long: DNA-directed RNA polymerase subunit beta (1392 aa).

Belongs to the RNA polymerase beta chain family. As to quaternary structure, the RNAP catalytic core consists of 2 alpha, 1 beta, 1 beta' and 1 omega subunit. When a sigma factor is associated with the core the holoenzyme is formed, which can initiate transcription.

The enzyme catalyses RNA(n) + a ribonucleoside 5'-triphosphate = RNA(n+1) + diphosphate. In terms of biological role, DNA-dependent RNA polymerase catalyzes the transcription of DNA into RNA using the four ribonucleoside triphosphates as substrates. The polypeptide is DNA-directed RNA polymerase subunit beta (Neisseria gonorrhoeae (strain NCCP11945)).